A 121-amino-acid chain; its full sequence is Large ribosomal subunit protein bL12 (121 aa).

This sequence belongs to the bacterial ribosomal protein bL12 family. As to quaternary structure, homodimer. Part of the ribosomal stalk of the 50S ribosomal subunit. Forms a multimeric L10(L12)X complex, where L10 forms an elongated spine to which 2 to 4 L12 dimers bind in a sequential fashion. Binds GTP-bound translation factors.

In terms of biological role, forms part of the ribosomal stalk which helps the ribosome interact with GTP-bound translation factors. Is thus essential for accurate translation. This chain is Large ribosomal subunit protein bL12, found in Erwinia tasmaniensis (strain DSM 17950 / CFBP 7177 / CIP 109463 / NCPPB 4357 / Et1/99).